The sequence spans 256 residues: Trans-aconitate 2-methyltransferase (256 aa).

The protein belongs to the methyltransferase superfamily. Tam family.

The protein resides in the cytoplasm. The enzyme catalyses trans-aconitate + S-adenosyl-L-methionine = (E)-3-(methoxycarbonyl)pent-2-enedioate + S-adenosyl-L-homocysteine. In terms of biological role, catalyzes the S-adenosylmethionine monomethyl esterification of trans-aconitate. The chain is Trans-aconitate 2-methyltransferase from Rhizobium leguminosarum bv. trifolii (strain WSM2304).